A 387-amino-acid chain; its full sequence is S-adenosylmethionine synthase (387 aa).

ATP is bound at residue His-16. Asp-18 is a binding site for Mg(2+). Glu-44 is a binding site for K(+). 2 residues coordinate L-methionine: Glu-57 and Gln-100. Residues 100–110 are flexible loop; sequence QSADIAVGVDE. ATP is bound by residues 165–167, Asp-241, 247–248, Ala-264, and Lys-268; these read DAK and RK. Asp-241 is an L-methionine binding site. Lys-272 is an L-methionine binding site.

The protein belongs to the AdoMet synthase family. As to quaternary structure, homotetramer; dimer of dimers. The cofactor is Mg(2+). Requires K(+) as cofactor.

Its subcellular location is the cytoplasm. The enzyme catalyses L-methionine + ATP + H2O = S-adenosyl-L-methionine + phosphate + diphosphate. Its pathway is amino-acid biosynthesis; S-adenosyl-L-methionine biosynthesis; S-adenosyl-L-methionine from L-methionine: step 1/1. Functionally, catalyzes the formation of S-adenosylmethionine (AdoMet) from methionine and ATP. The overall synthetic reaction is composed of two sequential steps, AdoMet formation and the subsequent tripolyphosphate hydrolysis which occurs prior to release of AdoMet from the enzyme. The polypeptide is S-adenosylmethionine synthase (Marinomonas sp. (strain MWYL1)).